A 229-amino-acid chain; its full sequence is Uracil-DNA glycosylase (229 aa).

The active-site Proton acceptor is Asp-65.

It belongs to the uracil-DNA glycosylase (UDG) superfamily. UNG family.

The protein resides in the cytoplasm. It carries out the reaction Hydrolyzes single-stranded DNA or mismatched double-stranded DNA and polynucleotides, releasing free uracil.. Excises uracil residues from the DNA which can arise as a result of misincorporation of dUMP residues by DNA polymerase or due to deamination of cytosine. The chain is Uracil-DNA glycosylase from Latilactobacillus sakei subsp. sakei (strain 23K) (Lactobacillus sakei subsp. sakei).